Reading from the N-terminus, the 193-residue chain is Zinc finger protein 740 (193 aa).

The disordered stretch occupies residues 33 to 75 (SKQAENGERAGSPDVLRCSSQGHRKDSDKSRSRKDDDSLSEAS). A Glycyl lysine isopeptide (Lys-Gly) (interchain with G-Cter in SUMO2) cross-link involves residue Lys-34. Residue Ser-44 is modified to Phosphoserine. Positions 55-69 (HRKDSDKSRSRKDDD) are enriched in basic and acidic residues. C2H2-type zinc fingers lie at residues 101–123 (FVCE…ILIH) and 129–151 (FECD…KRVH). The segment at 157–179 (YQCERCHQCFSRTDRLLRHKRMC) adopts a C2H2-type 3; atypical zinc-finger fold.

It belongs to the krueppel C2H2-type zinc-finger protein family.

It is found in the nucleus. In terms of biological role, may be involved in transcriptional regulation. The protein is Zinc finger protein 740 (ZNF740) of Homo sapiens (Human).